Here is a 1219-residue protein sequence, read N- to C-terminus: Cullin-associated NEDD8-dissociated protein 1 (1219 aa).

Position 2 is an N-acetylalanine (Ala2). 18 HEAT repeats span residues 44–81 (DLEVRLSSIILQQLDDVAGDVSGLAVKCLAPLVKKVGE), 83–119 (RIVEMTNKLCDKLLHGKDQHRDTASIALRTVVAQIAP), 209–244 (KATVEVVKNLSNRNAKSEITRTNIQMIGALCRAVGY), 248–288 (THLG…RCPR), 327–363 (EEDDESANEYTDDEDASWKVRRAAAKCLAGLIVSRSE), 367–404 (KVYQEACPKLIDRFKEREENVKMDVFNTFIDLLRQTGN), 423–460 (QEVSKIVKSINRQLREKSVKTKVGAFSVLRELVVVLPD), 464–503 (DHIGSLVPGIERALNDKSSTSNLKIEALVFTKLVLASHAP), 599–636 (AELPSCLPVLVDRMGNEITRLTAVKAFSVIATSPLHIN), 639–676 (CVLDHLIAELTGFLRKANRVLRQATLITMNTLVTAYGD), 808–848 (KNCS…RKDL), 850–883 (AHAGIETIVIESFQSPFEEIKSAASYALGNIAVG), 927–964 (SSVEKILALLFNHCESEEEGVRNVVAECLGKMALIEPE), 966–998 (LVPALQVRTTSPAAFTRATVVTAVKYSVVERPE), 1002–1039 (EIIFPQISSFLMLIKDGDRHVRRAAVSALSTFAHYKPN), 1043–1079 (GLLPELLPLLYDQTVIKKELIRTVDLGPFKHVVDDGL), 1101–1137 (NPSSFIVPFLKSGLEDHYDLKMLCHLILSLLADKCPS), and 1141–1180 (AVLDSLVEPLHKTISFKPKQDAVKQEHDRNEDMIRSALRA). The disordered stretch occupies residues 311–340 (FTDNMEEDTDNETLEDEEDDESANEYTDDE). Over residues 314–340 (NMEEDTDNETLEDEEDDESANEYTDDE) the composition is skewed to acidic residues.

Belongs to the CAND family. Interacts with CUL1 and CUL4. Binds unneddylated CUL1, but cannot bind CUL1 once it has been neddylated. Highly expressed in roots. Expressed in stems, flowers and siliques.

Its function is as follows. Key assembly factor of SCF (SKP1-CUL1-F-box protein) E3 ubiquitin ligase complexes that promotes the exchange of the substrate-recognition F-box subunit in SCF complexes, thereby playing a key role in the cellular repertoire of SCF complexes. Acts as a F-box protein exchange factor. Required for SCF(TIR1) function. Modulates SCF(TIR1) function through its interactions with the CUL1 subunit. Represses photomorphogenesis by promoting HY5 degradation in darkness. In Arabidopsis thaliana (Mouse-ear cress), this protein is Cullin-associated NEDD8-dissociated protein 1 (CAND1).